Here is a 568-residue protein sequence, read N- to C-terminus: Multidrug and toxin extrusion protein 1 (568 aa).

At methionine 1 the chain carries N-acetylmethionine. Residues 1–36 (MEAPVELGPGGRQASPERRHWLRCLVLSDFREELRA) lie on the Cytoplasmic side of the membrane. Residues 37–57 (LLVLACPAFLAQLMVFLISFV) traverse the membrane as a helical segment. Over 58 to 71 (SSVFCGHLSKLELN) the chain is Extracellular. A helical membrane pass occupies residues 72–92 (AVTLAIAVINVMGVSVGFGLS). Residues 93–119 (SACDTLISQTYGSRNLKHVGVILQRGS) lie on the Cytoplasmic side of the membrane. Residues 120 to 140 (LILLLCCLPCWALFLNTQHIL) traverse the membrane as a helical segment. Over 141–151 (LLFRQDPAVSR) the chain is Extracellular. A helical membrane pass occupies residues 152–172 (LTQTYVTIFIPALPATFLYTL). Topologically, residues 173–175 (QVK) are cytoplasmic. The helical transmembrane segment at 176–196 (YLLNQGIVLPQVVTGVAANLV) threads the bilayer. At 197-214 (NALANYLFVYQLHLGVMG) the chain is on the extracellular side. A helical transmembrane segment spans residues 215-235 (SALANTVAQFTLALLLFLYIL). Topologically, residues 236-255 (RSKVYQATWGGWSLECLQDW) are cytoplasmic. A helical membrane pass occupies residues 256-278 (ASFFRLAIPSMLMLCMEWWAYEI). Over 279–294 (GSFLSGILGMVELGAQ) the chain is Extracellular. A helical membrane pass occupies residues 295–315 (SVTYELAVIVYMIPMGLSVAV). The Cytoplasmic portion of the chain corresponds to 316–335 (NVRVGNALGAGNIEQAKKSS). The helical transmembrane segment at 336-356 (AVALLVTELIAVVFCVMLLSC) threads the bilayer. Topologically, residues 357-369 (KDLVGYIFTSDRD) are extracellular. Residues 370–390 (IIALVAQVTPIYAVSHLFESL) traverse the membrane as a helical segment. The Cytoplasmic segment spans residues 391 to 407 (AGTSGGILRGSGNQKFG). A helical membrane pass occupies residues 408–430 (AIVNAIGYYVVGLPIGIALMFAA). The Extracellular segment spans residues 431–433 (KLG). A helical membrane pass occupies residues 434 to 456 (VIGLWLGIVVCAVSQAVCFLGFI). At 457–544 (ARLNWTKACQ…LSGKQLALRR (88 aa)) the chain is on the cytoplasmic side. Residues 545–565 (GLLLLGVILVLLAGILVKVYV) traverse the membrane as a helical segment. The Extracellular segment spans residues 566-568 (RTQ).

Belongs to the multi antimicrobial extrusion (MATE) (TC 2.A.66.1) family. In terms of tissue distribution, predominantly expressed in kidney and liver.

It is found in the cell membrane. The protein localises to the apical cell membrane. The catalysed reaction is thiamine(out) + H(+)(in) = thiamine(in) + H(+)(out). The enzyme catalyses estrone 3-sulfate(in) + H(+)(out) = estrone 3-sulfate(out) + H(+)(in). It carries out the reaction creatinine(in) + H(+)(out) = creatinine(out) + H(+)(in). It catalyses the reaction agmatine(in) + H(+)(out) = agmatine(out) + H(+)(in). Multidrug efflux pump that functions as a H(+)/organic cation antiporter. Plays a physiological role in the excretion of cationic compounds including endogenous metabolites, drugs, toxins through the kidney and liver, into urine and bile respectively. Mediates the efflux of endogenous compounds such as creatinine, vitamin B1/thiamine, agmatine and estrone-3-sulfate. May also contribute to regulate the transport of cationic compounds in testis across the blood-testis-barrier. This chain is Multidrug and toxin extrusion protein 1 (SLC47A1), found in Oryctolagus cuniculus (Rabbit).